The following is a 23-amino-acid chain: Aurein-4.2 (23 aa).

This sequence belongs to the frog skin active peptide (FSAP) family. Aurein subfamily. In terms of tissue distribution, expressed by the skin dorsal glands.

It localises to the secreted. Functionally, has no antimicrobial or anticancer activity. This chain is Aurein-4.2, found in Ranoidea aurea (Green and golden bell frog).